The following is a 632-amino-acid chain: ATP-dependent zinc metalloprotease FtsH (632 aa).

Residues 1-9 (MKPTNEPKK) are Cytoplasmic-facing. The helical transmembrane segment at 10 to 30 (PFFQSPIVLAVLGGILLIFFL) threads the bilayer. The Periplasmic portion of the chain corresponds to 31 to 116 (RSFNSDGSFS…INYSGFSESN (86 aa)). The chain crosses the membrane as a helical span at residues 117–137 (FFTDMLGWLMPILVILGLWMF). Residues 138–632 (MANRMQKNMG…RLIPLEEQAS (495 aa)) lie on the Cytoplasmic side of the membrane. 210–217 (GPPGTGKT) serves as a coordination point for ATP. A Zn(2+)-binding site is contributed by His434. Residue Glu435 is part of the active site. Residues His438 and Asp511 each contribute to the Zn(2+) site.

In the central section; belongs to the AAA ATPase family. It in the C-terminal section; belongs to the peptidase M41 family. As to quaternary structure, homohexamer. Zn(2+) serves as cofactor.

It localises to the cell inner membrane. Its function is as follows. Acts as a processive, ATP-dependent zinc metallopeptidase for both cytoplasmic and membrane proteins. Plays a role in the quality control of integral membrane proteins. The protein is ATP-dependent zinc metalloprotease FtsH of Helicobacter pylori (strain J99 / ATCC 700824) (Campylobacter pylori J99).